A 283-amino-acid chain; its full sequence is Pantothenate synthetase 2 (283 aa).

34 to 41 (MGALHDGH) is an ATP binding site. The active-site Proton donor is histidine 41. Glutamine 65 contacts (R)-pantoate. Residue glutamine 65 coordinates beta-alanine. Residue 152-155 (GEKD) participates in ATP binding. Glutamine 158 provides a ligand contact to (R)-pantoate. ATP-binding positions include valine 181 and 189 to 192 (MSSR).

This sequence belongs to the pantothenate synthetase family. Homodimer.

It is found in the cytoplasm. It carries out the reaction (R)-pantoate + beta-alanine + ATP = (R)-pantothenate + AMP + diphosphate + H(+). It participates in cofactor biosynthesis; (R)-pantothenate biosynthesis; (R)-pantothenate from (R)-pantoate and beta-alanine: step 1/1. Functionally, catalyzes the condensation of pantoate with beta-alanine in an ATP-dependent reaction via a pantoyl-adenylate intermediate. This is Pantothenate synthetase 2 from Bradyrhizobium diazoefficiens (strain JCM 10833 / BCRC 13528 / IAM 13628 / NBRC 14792 / USDA 110).